The chain runs to 361 residues: S-adenosylmethionine:tRNA ribosyltransferase-isomerase (361 aa).

The protein belongs to the QueA family. As to quaternary structure, monomer.

The protein resides in the cytoplasm. The enzyme catalyses 7-aminomethyl-7-carbaguanosine(34) in tRNA + S-adenosyl-L-methionine = epoxyqueuosine(34) in tRNA + adenine + L-methionine + 2 H(+). The protein operates within tRNA modification; tRNA-queuosine biosynthesis. Transfers and isomerizes the ribose moiety from AdoMet to the 7-aminomethyl group of 7-deazaguanine (preQ1-tRNA) to give epoxyqueuosine (oQ-tRNA). The polypeptide is S-adenosylmethionine:tRNA ribosyltransferase-isomerase (Actinobacillus pleuropneumoniae serotype 7 (strain AP76)).